The following is a 116-amino-acid chain: G antigen 2B/2C (116 aa).

Residues 1–116 (MSWRGRSTYR…PEEGEKQSQC (116 aa)) form a disordered region. Acidic residues-rich tracts occupy residues 31-44 (FSDE…EEGE) and 86-95 (ECEDGPDGQE). Residues 102–116 (EEVKTPEEGEKQSQC) are compositionally biased toward basic and acidic residues.

It belongs to the GAGE family. As to expression, expressed in a variety of tumor tissues but not in normal tissues, except testis.

In terms of biological role, antigen, recognized on melanoma by autologous cytolytic T-lymphocytes. This chain is G antigen 2B/2C (GAGE2B), found in Homo sapiens (Human).